Reading from the N-terminus, the 659-residue chain is Ion-translocating oxidoreductase complex subunit C (659 aa).

4Fe-4S ferredoxin-type domains lie at threonine 366–tyrosine 397 and lysine 407–tyrosine 436. Residues cysteine 377, cysteine 380, cysteine 383, cysteine 387, cysteine 416, cysteine 419, cysteine 422, and cysteine 426 each coordinate [4Fe-4S] cluster.

Belongs to the 4Fe4S bacterial-type ferredoxin family. RnfC subfamily. The complex is composed of six subunits: RnfA, RnfB, RnfC, RnfD, RnfE and RnfG. [4Fe-4S] cluster serves as cofactor.

The protein localises to the cell inner membrane. Its function is as follows. Part of a membrane-bound complex that couples electron transfer with translocation of ions across the membrane. The chain is Ion-translocating oxidoreductase complex subunit C from Yersinia pseudotuberculosis serotype IB (strain PB1/+).